Here is a 274-residue protein sequence, read N- to C-terminus: 2-dehydro-3-deoxyphosphooctonate aldolase (274 aa).

This sequence belongs to the KdsA family.

The protein localises to the cytoplasm. It carries out the reaction D-arabinose 5-phosphate + phosphoenolpyruvate + H2O = 3-deoxy-alpha-D-manno-2-octulosonate-8-phosphate + phosphate. Its pathway is carbohydrate biosynthesis; 3-deoxy-D-manno-octulosonate biosynthesis; 3-deoxy-D-manno-octulosonate from D-ribulose 5-phosphate: step 2/3. It functions in the pathway bacterial outer membrane biogenesis; lipopolysaccharide biosynthesis. This chain is 2-dehydro-3-deoxyphosphooctonate aldolase, found in Rickettsia canadensis (strain McKiel).